A 410-amino-acid chain; its full sequence is Phosphoglycerate kinase (410 aa).

Substrate-binding positions include 19-21, Arg34, 57-60, Arg114, and Arg154; these read DLN and HQGK. ATP contacts are provided by residues Glu332 and 358 to 361; that span reads GGHS.

This sequence belongs to the phosphoglycerate kinase family. Homodimer.

It is found in the cytoplasm. The enzyme catalyses (2R)-3-phosphoglycerate + ATP = (2R)-3-phospho-glyceroyl phosphate + ADP. It participates in carbohydrate degradation; glycolysis; pyruvate from D-glyceraldehyde 3-phosphate: step 2/5. This Pyrococcus horikoshii (strain ATCC 700860 / DSM 12428 / JCM 9974 / NBRC 100139 / OT-3) protein is Phosphoglycerate kinase (pgk).